The sequence spans 1788 residues: Laminin subunit beta-1 (1788 aa).

Residues 1-24 form the signal peptide; that stretch reads MLELRLIVVIVLALLSWQWDPVDS. A disordered region spans residues 23–43; it reads DSQRPPQHGRRDRPKYPPNKF. Positions 50–287 constitute a Laminin N-terminal domain; the sequence is ERSSCYPATG…GISNMVVRGS (238 aa). N-linked (GlcNAc...) asparagine glycosylation is found at asparagine 138, asparagine 201, and asparagine 232. Intrachain disulfides connect cysteine 288/cysteine 297, cysteine 290/cysteine 318, cysteine 320/cysteine 329, cysteine 332/cysteine 352, cysteine 355/cysteine 364, cysteine 357/cysteine 382, cysteine 385/cysteine 394, cysteine 397/cysteine 415, cysteine 418/cysteine 431, cysteine 420/cysteine 446, cysteine 448/cysteine 457, cysteine 460/cysteine 475, cysteine 478/cysteine 491, cysteine 480/cysteine 498, cysteine 500/cysteine 509, cysteine 512/cysteine 526, cysteine 529/cysteine 541, cysteine 531/cysteine 548, and cysteine 550/cysteine 559. 4 consecutive Laminin EGF-like domains span residues 288 to 354, 355 to 417, 418 to 477, and 478 to 528; these read CSCY…ACKK, CECN…VCQP, CDCD…GCEP, and CTCN…GCSL. N-linked (GlcNAc...) asparagine glycosylation occurs at asparagine 487. The Laminin EGF-like 5; truncated domain maps to 529–559; sequence CNCDAGGSYDNYCDVISGQCRCRPHMTGRSC. In terms of domain architecture, Laminin IV type B spans 567-783; sequence FIPLLPEVHE…LDNILSVFVH (217 aa). Asparagine 591 carries an N-linked (GlcNAc...) asparagine glycan. Positions 641–643 match the Cell attachment site motif; it reads RGD. Disulfide bonds link cysteine 789/cysteine 801, cysteine 791/cysteine 808, cysteine 810/cysteine 819, cysteine 822/cysteine 834, cysteine 837/cysteine 849, cysteine 839/cysteine 856, cysteine 858/cysteine 867, cysteine 870/cysteine 880, cysteine 883/cysteine 892, cysteine 885/cysteine 899, cysteine 902/cysteine 911, cysteine 914/cysteine 930, cysteine 933/cysteine 949, cysteine 935/cysteine 960, cysteine 962/cysteine 971, cysteine 974/cysteine 988, cysteine 991/cysteine 1005, cysteine 993/cysteine 1012, cysteine 1015/cysteine 1024, cysteine 1027/cysteine 1040, cysteine 1043/cysteine 1057, cysteine 1045/cysteine 1064, cysteine 1066/cysteine 1075, cysteine 1078/cysteine 1091, cysteine 1094/cysteine 1106, cysteine 1096/cysteine 1113, cysteine 1115/cysteine 1124, cysteine 1127/cysteine 1139, cysteine 1142/cysteine 1154, cysteine 1144/cysteine 1161, cysteine 1163/cysteine 1172, and cysteine 1175/cysteine 1186. Laminin EGF-like domains follow at residues 789–836, 837–882, 883–932, 933–990, 991–1042, 1043–1093, 1094–1141, and 1142–1188; these read CNCN…GCKA, CDCN…ECRV, CQCN…GCRP, CRCP…TCSK, CECS…NCQQ, CECD…GCES, CNCD…KCQP, and CECD…HCSP. N-linked (GlcNAc...) asparagine glycosylation is present at asparagine 1051. The segment at 1189–1405 is domain II; sequence CGECFNNWDL…SQIPELNNQV (217 aa). Asparagine 1246, asparagine 1301, asparagine 1330, and asparagine 1341 each carry an N-linked (GlcNAc...) asparagine glycan. Residues 1255 to 1405 are a coiled coil; it reads EKLDYETQSL…SQIPELNNQV (151 aa). The interval 1406–1432 is domain alpha; it reads CGKPGDPCDSLCGGAGCGHCGGFLSCE. A domain I region spans residues 1433–1788; the sequence is HGAKTHSEEA…RGSHYRQCYT (356 aa). Positions 1453-1505 form a coiled coil; it reads ITSKKDQADQTIRALTQAKLNASEAYEKAKRGFEQSERYLNQTNANIKLAENL. Residues asparagine 1473, asparagine 1493, and asparagine 1515 are each glycosylated (N-linked (GlcNAc...) asparagine). The stretch at 1540–1561 forms a coiled coil; it reads EEIETLGDQINRAVSSLKNVEA. N-linked (GlcNAc...) asparagine glycans are attached at residues asparagine 1581, asparagine 1644, and asparagine 1703. A coiled-coil region spans residues 1608–1762; the sequence is QGKAKDAIQQ…QQLLRLQAEI (155 aa). Residues 1690-1719 form a disordered region; the sequence is GEANNLQSATSATNQTLTDRASRSENARER. Polar residues predominate over residues 1693–1708; it reads NNLQSATSATNQTLTD. Positions 1709-1719 are enriched in basic and acidic residues; the sequence is RASRSENARER.

Laminin is a complex glycoprotein, consisting of three different polypeptide chains (alpha, beta, gamma), which are bound to each other by disulfide bonds into a cross-shaped molecule comprising one long and three short arms with globules at each end. In terms of tissue distribution, found in the basement membranes (major component).

It is found in the secreted. Its subcellular location is the extracellular space. The protein localises to the extracellular matrix. It localises to the basement membrane. Its function is as follows. Binding to cells via a high affinity receptor, laminin is thought to mediate the attachment, migration and organization of cells into tissues during embryonic development by interacting with other extracellular matrix components. Required for Ndg localization to the basement membrane. In Drosophila melanogaster (Fruit fly), this protein is Laminin subunit beta-1 (LanB1).